The chain runs to 317 residues: Malate dehydrogenase (317 aa).

Residues 10-15 and Asp-34 contribute to the NAD(+) site; that span reads GGGQIG. The substrate site is built by Arg-83 and Arg-89. NAD(+) contacts are provided by residues Asn-96 and 119–121; that span reads ISN. Substrate is bound by residues Asn-121 and Arg-152. The Proton acceptor role is filled by His-176.

Belongs to the LDH/MDH superfamily. MDH type 3 family.

It catalyses the reaction (S)-malate + NAD(+) = oxaloacetate + NADH + H(+). Catalyzes the reversible oxidation of malate to oxaloacetate. This Geobacter metallireducens (strain ATCC 53774 / DSM 7210 / GS-15) protein is Malate dehydrogenase.